An 812-amino-acid polypeptide reads, in one-letter code: Eukaryotic translation initiation factor 3 subunit C (812 aa).

The segment at 1 to 110 (MSRFFSSNYE…EESDEEDGKK (110 aa)) is disordered. Composition is skewed to acidic residues over residues 18-30 (SEEDLLSSSEEDL) and 38-64 (SELDQESDDSFFNESESESEADVDSDD). Phosphoserine occurs at positions 98, 99, and 103. Positions 608–783 (YHQHINLDLI…TIFVVEKGDE (176 aa)) constitute a PCI domain.

The protein belongs to the eIF-3 subunit C family. The eukaryotic translation initiation factor 3 (eIF-3) core complex is composed of TIF32, PRT1, NIP1, TIF34 and TIF35. A subcomplex of TIF32, NIP1 and PRT1 mediates the interaction with eIF-1, TIF5/eIF-5 and HCR1. The factors eIF-1, eIF-2, eIF-3, TIF5/eIF-5 and methionyl-tRNAi form a multifactor complex (MFC) that may bind to the 40S ribosome. TIF32, NIP1 and TIF5/eIF-5 comprise a minimal 40S-ribosome-binding unit. NIP1 interacts with TIF5/eIF-5 and SUI1.

The protein resides in the cytoplasm. Functionally, component of the eukaryotic translation initiation factor 3 (eIF-3) complex, which is involved in protein synthesis of a specialized repertoire of mRNAs and, together with other initiation factors, stimulates binding of mRNA and methionyl-tRNAi to the 40S ribosome. The eIF-3 complex specifically targets and initiates translation of a subset of mRNAs involved in cell proliferation. The sequence is that of Eukaryotic translation initiation factor 3 subunit C from Saccharomyces cerevisiae (strain ATCC 204508 / S288c) (Baker's yeast).